We begin with the raw amino-acid sequence, 727 residues long: MLIGGAQNRLYQLRTSNILGLLRTRSALRVGSKVELRCPYNNWTNLGRSHFSSTSIPPTFKSKTFGREKGLLAHNINVKRLSSTVSKSKLPNEDTAHNASEKNSKKTDTKAVNISELKILKDLFKYIWPRGNTKVKVRVLLALALLIGAKVLNVQVPFFFKQIIDGMNVDWSDATVALPAALGLTIMCYGLARFGAVLFGELRNAIFARVAQNAIRNVSLQTFEHLMKLDLGWHLSRQTGGLTRAMDRGTKGISYVLSAMVFHIIPITFEISVVCGILTYQFGASFAGITFTTMLLYSIFTIRTTAWRTRFRKEANKADNKGASVALDSLINFEAVKYFNNESYLANKYHNSLIKYRDSQVKVAQSLAFLNSGQSLIFTTALTGMMYMGCTGVIGGDLTVGDLVLINQLVFQLSVPLNFLGSVYRELKQSLIDMESLFKLRKNQVKIQNCSQPKSISKSDGPFEIKFENVTFGYDGQRKILKNASFTIPAGMKTAIAGPSGSGKSTVLKLVFRFYDPEEGRVLVNGVDVREYDIDQLRKAIGVVPQDTPLFNDTIWENVKFGRIEASDEEITRVIDKAQLSDLIAKLPQGSSTIVGERGLMISGGEKQRLAIARVLLKDADIMFFDEATSALDTHTEQSLLRTIRRNFNSGEKTSVYIAHRLRTIADADKIIVLEEGTVREEGTHQELLARENSLYKELWRIQEDLDLLEDEINHEKETLEKLNKSI.

The transit peptide at 1–25 (MLIGGAQNRLYQLRTSNILGLLRTR) directs the protein to the mitochondrion. Topologically, residues 26 to 138 (SALRVGSKVE…PRGNTKVKVR (113 aa)) are mitochondrial matrix. The interval 87-107 (KSKLPNEDTAHNASEKNSKKT) is disordered. Over residues 90 to 107 (LPNEDTAHNASEKNSKKT) the composition is skewed to basic and acidic residues. A helical membrane pass occupies residues 139 to 160 (VLLALALLIGAKVLNVQVPFFF). Residues 139–429 (VLLALALLIG…LGSVYRELKQ (291 aa)) enclose the ABC transmembrane type-1 domain. Topologically, residues 161–183 (KQIIDGMNVDWSDATVALPAALG) are mitochondrial intermembrane. Residues 184–207 (LTIMCYGLARFGAVLFGELRNAIF) traverse the membrane as a helical segment. Residues 208-256 (ARVAQNAIRNVSLQTFEHLMKLDLGWHLSRQTGGLTRAMDRGTKGISYV) lie on the Mitochondrial matrix side of the membrane. The helical transmembrane segment at 257 to 280 (LSAMVFHIIPITFEISVVCGILTY) threads the bilayer. A topological domain (mitochondrial intermembrane) is located at residue Gln-281. Residues 282–302 (FGASFAGITFTTMLLYSIFTI) traverse the membrane as a helical segment. Over 303-368 (RTTAWRTRFR…SQVKVAQSLA (66 aa)) the chain is Mitochondrial matrix. Glutathione-binding positions include 308 to 312 (RTRFR) and 371 to 374 (NSGQ). Residues 369–387 (FLNSGQSLIFTTALTGMMY) form a helical membrane-spanning segment. The Mitochondrial intermembrane portion of the chain corresponds to 388-402 (MGCTGVIGGDLTVGD). A helical transmembrane segment spans residues 403–424 (LVLINQLVFQLSVPLNFLGSVY). Gly-421 provides a ligand contact to glutathione. Residues 425–727 (RELKQSLIDM…ETLEKLNKSI (303 aa)) lie on the Mitochondrial matrix side of the membrane. The ABC transporter domain maps to 465-701 (IKFENVTFGY…ENSLYKELWR (237 aa)). Residues Tyr-474 and 498–509 (GPSGSGKSTVLK) each bind ATP.

The protein belongs to the ABC transporter superfamily. ABCB family. Heavy Metal importer (TC 3.A.1.210) subfamily. Homodimer.

The protein localises to the mitochondrion inner membrane. In terms of biological role, performs an essential function in the generation of cytoplasmic iron-sulfur proteins by mediating the ATP-dependent export of Fe/S cluster precursors synthesized by NFS1 and other mitochondrial proteins. Hydrolyzes ATP. Binds glutathione and may function by transporting a glutathione-conjugated iron-sulfur compound. The protein is Iron-sulfur clusters transporter ATM1, mitochondrial of Candida glabrata (strain ATCC 2001 / BCRC 20586 / JCM 3761 / NBRC 0622 / NRRL Y-65 / CBS 138) (Yeast).